We begin with the raw amino-acid sequence, 339 residues long: Phenylalanine--tRNA ligase alpha subunit (339 aa).

Glu-254 is a binding site for Mg(2+).

The protein belongs to the class-II aminoacyl-tRNA synthetase family. Phe-tRNA synthetase alpha subunit type 1 subfamily. Tetramer of two alpha and two beta subunits. It depends on Mg(2+) as a cofactor.

It is found in the cytoplasm. It catalyses the reaction tRNA(Phe) + L-phenylalanine + ATP = L-phenylalanyl-tRNA(Phe) + AMP + diphosphate + H(+). The polypeptide is Phenylalanine--tRNA ligase alpha subunit (Alkaliphilus oremlandii (strain OhILAs) (Clostridium oremlandii (strain OhILAs))).